The following is a 152-amino-acid chain: Pleckstrin homology-like domain family A member 2 (152 aa).

Phosphoserine is present on residues Ser-3 and Ser-42. The PH domain occupies 7–99 (VLREGELEKR…WNAAIALALI (93 aa)). The disordered stretch occupies residues 112 to 152 (SRQERTAPAAPAEDAVAAAAAAPSEPSEPSRPSPQPKPRTP). Low complexity predominate over residues 118–138 (APAAPAEDAVAAAAAAPSEPS). Over residues 140-152 (PSRPSPQPKPRTP) the composition is skewed to pro residues. Phosphoserine occurs at positions 141 and 144. Thr-151 is modified (phosphothreonine).

The protein belongs to the PHLDA2 family. In terms of tissue distribution, expressed in placenta and adult prostate gland. In placenta, it is present in all cells of the villous cytotrophoblast. The protein is absent in cells from hydatidiform moles. Hydatidiform mole is a gestation characterized by abnormal development of both fetus and trophoblast. The majority of hydatidiform moles are associated with an excess of paternal to maternal genomes and are likely to result from the abnormal expression of imprinted genes (at protein level). Expressed at low levels in adult liver and lung, and fetal liver. Expressed in adult brain and neuroblastoma, medullablastoma and glioblastoma cell lines.

Its subcellular location is the cytoplasm. The protein resides in the membrane. In terms of biological role, plays a role in regulating placenta growth. May act via its PH domain that competes with other PH domain-containing proteins, thereby preventing their binding to membrane lipids. This is Pleckstrin homology-like domain family A member 2 (PHLDA2) from Homo sapiens (Human).